The chain runs to 708 residues: Ubiquitin thioesterase ZRANB1 (708 aa).

Residues 3–33 (ERGIKWACEYCTYENWPSAIKCTMCRAQRPS) form a RanBP2-type 1 zinc finger. Residues cysteine 10, cysteine 13, cysteine 24, and cysteine 27 each coordinate Zn(2+). The disordered stretch occupies residues 38-73 (TEDPFKSGSSDVGRDWDPSSTEGGSSPLICPDSSAR). RanBP2-type zinc fingers lie at residues 84-113 (NANKWSCHMCTYLNWPRAIRCTQCLSQRRT) and 149-178 (RTQHWTCSVCTYENWAKAKRCVVCDHPRPN). Positions 90, 93, 104, 107, 155, 158, 169, and 172 each coordinate Zn(2+). The segment at 200–225 (RARWRGSCSSGNSQRRSPPATKRDSE) is disordered. A compositionally biased stretch (polar residues) spans 206–215 (SCSSGNSQRR). 2 ANK repeats span residues 260–290 (KKTDWLFLNACVGVVEGDLAAIEAYKSSGGD) and 313–340 (YTLVHLAIRFQRQDMLAILLTEVSQQAA). The interval 392–641 (PTVQEKLFDE…LSAQELGNEE (250 aa)) is TRAF-binding. Residues 432–592 (LYALWNRTAG…RGHFSALVAM (161 aa)) form the OTU domain. Cysteine 443 functions as the Nucleophile in the catalytic mechanism. Residue histidine 585 is the Proton acceptor of the active site.

This sequence belongs to the peptidase C64 family. Interacts with TRAF6. Interacts with APC. Widely expressed.

The protein resides in the cytoplasm. The protein localises to the nucleus. It carries out the reaction Thiol-dependent hydrolysis of ester, thioester, amide, peptide and isopeptide bonds formed by the C-terminal Gly of ubiquitin (a 76-residue protein attached to proteins as an intracellular targeting signal).. Functionally, ubiquitin thioesterase, which specifically hydrolyzes 'Lys-29'-linked and 'Lys-33'-linked diubiquitin. Also cleaves 'Lys-63'-linked chains, but with 40-fold less efficiency compared to 'Lys-29'-linked ones. Positive regulator of the Wnt signaling pathway that deubiquitinates APC protein, a negative regulator of Wnt-mediated transcription. Acts as a regulator of autophagy by mediating deubiquitination of PIK3C3/VPS34, thereby promoting autophagosome maturation. Plays a role in the regulation of cell morphology and cytoskeletal organization. Required in the stress fiber dynamics and cell migration. This chain is Ubiquitin thioesterase ZRANB1, found in Homo sapiens (Human).